Here is a 196-residue protein sequence, read N- to C-terminus: Protein/nucleic acid deglycase 3 (196 aa).

The Nucleophile role is filled by C106. C106 is modified (cysteine sulfinic acid (-SO2H); alternate).

Belongs to the peptidase C56 family. In terms of assembly, homodimer. In terms of processing, cys-106 is easily oxidized to sulfinic acid.

It carries out the reaction N(omega)-(1-hydroxy-2-oxopropyl)-L-arginyl-[protein] + H2O = lactate + L-arginyl-[protein] + H(+). It catalyses the reaction N(6)-(1-hydroxy-2-oxopropyl)-L-lysyl-[protein] + H2O = lactate + L-lysyl-[protein] + H(+). The enzyme catalyses S-(1-hydroxy-2-oxopropyl)-L-cysteinyl-[protein] + H2O = lactate + L-cysteinyl-[protein] + H(+). The catalysed reaction is N(omega)-(1-hydroxy-2-oxoethyl)-L-arginyl-[protein] + H2O = L-arginyl-[protein] + glycolate + H(+). It carries out the reaction N(6)-(1-hydroxy-2-oxoethyl)-L-lysyl-[protein] + H2O = glycolate + L-lysyl-[protein] + H(+). It catalyses the reaction S-(1-hydroxy-2-oxoethyl)-L-cysteinyl-[protein] + H2O = glycolate + L-cysteinyl-[protein] + H(+). The enzyme catalyses N(2)-(1-hydroxy-2-oxopropyl)-dGTP + H2O = lactate + dGTP + H(+). The catalysed reaction is N(2)-(1-hydroxy-2-oxopropyl)-GTP + H2O = lactate + GTP + H(+). It carries out the reaction N(2)-(1-hydroxy-2-oxopropyl)-GDP + H2O = lactate + GDP + H(+). It catalyses the reaction N(2)-(1-hydroxy-2-oxopropyl)-GMP + H2O = lactate + GMP + H(+). The enzyme catalyses N(2)-(1-hydroxy-2-oxoethyl)-dGTP + H2O = dGTP + glycolate + H(+). The catalysed reaction is N(2)-(1-hydroxy-2-oxoethyl)-GTP + H2O = glycolate + GTP + H(+). It carries out the reaction N(2)-(1-hydroxy-2-oxoethyl)-GDP + H2O = glycolate + GDP + H(+). It catalyses the reaction N(2)-(1-hydroxy-2-oxoethyl)-GMP + H2O = glycolate + GMP + H(+). The enzyme catalyses an N(2)-(1-hydroxy-2-oxopropyl)-guanosine in RNA + H2O = a guanosine in RNA + lactate + H(+). The catalysed reaction is an N(2)-(1-hydroxy-2-oxopropyl)-2'-deoxyguanosine in DNA + H2O = a 2'-deoxyguanosine in DNA + lactate + H(+). It carries out the reaction an N(2)-(1-hydroxy-2-oxoethyl)-guanosine in RNA + H2O = a guanosine in RNA + glycolate + H(+). It catalyses the reaction an N(2)-(1-hydroxy-2-oxoethyl)-2'-deoxyguanosine in DNA + H2O = a 2'-deoxyguanosine in DNA + glycolate + H(+). Its activity is regulated as follows. Glyoxalase activity is inhibited by zinc ions. Active as a chaperone in both its reduced and oxidized states, and is more active in its oxidized form. Protein and nucleotide deglycase that catalyzes the deglycation of the Maillard adducts formed between amino groups of proteins or nucleotides and reactive carbonyl groups of glyoxals. Thus, functions as a protein deglycase that repairs methylglyoxal- and glyoxal-glycated proteins, and releases repaired proteins and lactate or glycolate, respectively. Deglycates cysteine, arginine and lysine residues in proteins, and thus reactivates these proteins by reversing glycation by glyoxals. Is able to repair glycated serum albumin, collagen, glyceraldehyde-3-phosphate dehydrogenase, and fructose biphosphate aldolase. Acts on early glycation intermediates (hemithioacetals and aminocarbinols), preventing the formation of Schiff bases and advanced glycation endproducts (AGE) that cause irreversible damage. Also functions as a nucleotide deglycase able to repair glycated guanine in the free nucleotide pool (GTP, GDP, GMP, dGTP) and in DNA and RNA. Is thus involved in a major nucleotide repair system named guanine glycation repair (GG repair), dedicated to reversing methylglyoxal and glyoxal damage via nucleotide sanitization and direct nucleic acid repair. However, is less efficient than Hsp31 and YhbO, suggesting that YajL might be preferentially dedicated to protein repair. Displays a covalent chaperone activity with sulfenylated thiol proteins by forming mixed disulfides with members of the thiol proteome, and preferentially with sulfenylated cellular proteins, upon oxidative stress; these mixed disulfides can be subsequently reduced by low-molecular-weight thiols to regenerate YajL and reduced proteins. Involved in biogenesis of ribosomal proteins, probably as a ribosomal protein-folding chaperone. Confers resistance to oxidative stress. Plays an important role in protection against electrophile/carbonyl stress. The chaperone activity reported for YajL is probably recruited to execute its deglycase activity, to interact with non-native glycated proteins and gain access to partially buried glycated sites. Also displays an apparent glyoxalase activity that in fact reflects its deglycase activity. This chain is Protein/nucleic acid deglycase 3 (yajL), found in Escherichia coli (strain K12).